The following is a 431-amino-acid chain: GTPase Obg (431 aa).

Positions 1–158 (MFVDQVKINV…REIRLELKVL (158 aa)) constitute an Obg domain. Residues 125–145 (GNIHFASPKNPAPEIAENGEP) are disordered. The OBG-type G domain maps to 159–335 (ADVGLVGFPS…LLQRTADMLA (177 aa)). GTP is bound by residues 165-172 (GFPSVGKS), 190-194 (FTTLV), 212-215 (DLPG), 282-285 (NKMD), and 316-318 (SAL). Mg(2+)-binding residues include Ser172 and Thr192. Positions 353–431 (YNFQPEAEFT…IDDFTFEYMA (79 aa)) constitute an OCT domain.

The protein belongs to the TRAFAC class OBG-HflX-like GTPase superfamily. OBG GTPase family. Monomer. Requires Mg(2+) as cofactor.

It is found in the cytoplasm. Functionally, an essential GTPase which binds GTP, GDP and possibly (p)ppGpp with moderate affinity, with high nucleotide exchange rates and a fairly low GTP hydrolysis rate. Plays a role in control of the cell cycle, stress response, ribosome biogenesis and in those bacteria that undergo differentiation, in morphogenesis control. The protein is GTPase Obg of Levilactobacillus brevis (strain ATCC 367 / BCRC 12310 / CIP 105137 / JCM 1170 / LMG 11437 / NCIMB 947 / NCTC 947) (Lactobacillus brevis).